Reading from the N-terminus, the 96-residue chain is Co-chaperonin GroES (96 aa).

It belongs to the GroES chaperonin family. As to quaternary structure, heptamer of 7 subunits arranged in a ring. Interacts with the chaperonin GroEL.

The protein resides in the cytoplasm. Together with the chaperonin GroEL, plays an essential role in assisting protein folding. The GroEL-GroES system forms a nano-cage that allows encapsulation of the non-native substrate proteins and provides a physical environment optimized to promote and accelerate protein folding. GroES binds to the apical surface of the GroEL ring, thereby capping the opening of the GroEL channel. This chain is Co-chaperonin GroES, found in Methylobacillus flagellatus (strain ATCC 51484 / DSM 6875 / VKM B-1610 / KT).